A 159-amino-acid polypeptide reads, in one-letter code: Phosphopantetheine adenylyltransferase (159 aa).

Substrate is bound at residue Ser-9. Residues 9-10 (SF) and His-17 each bind ATP. 3 residues coordinate substrate: Lys-41, Leu-73, and Lys-87. Residues 88–90 (GLR), Glu-98, and 122–128 (YSFLSSS) contribute to the ATP site.

This sequence belongs to the bacterial CoaD family. As to quaternary structure, homohexamer. It depends on Mg(2+) as a cofactor.

The protein localises to the cytoplasm. It catalyses the reaction (R)-4'-phosphopantetheine + ATP + H(+) = 3'-dephospho-CoA + diphosphate. The protein operates within cofactor biosynthesis; coenzyme A biosynthesis; CoA from (R)-pantothenate: step 4/5. Functionally, reversibly transfers an adenylyl group from ATP to 4'-phosphopantetheine, yielding dephospho-CoA (dPCoA) and pyrophosphate. This chain is Phosphopantetheine adenylyltransferase, found in Streptomyces avermitilis (strain ATCC 31267 / DSM 46492 / JCM 5070 / NBRC 14893 / NCIMB 12804 / NRRL 8165 / MA-4680).